We begin with the raw amino-acid sequence, 363 residues long: Chorismate synthase (363 aa).

Residues 42-61 are disordered; the sequence is QRDLDRRKPGTSRHTTQRQE. Residues R48 and R54 each coordinate NADP(+). FMN-binding positions include 125 to 127, 237 to 238, G277, 292 to 296, and R318; these read RSS, NA, and KPTSS.

It belongs to the chorismate synthase family. As to quaternary structure, homotetramer. FMNH2 is required as a cofactor.

It catalyses the reaction 5-O-(1-carboxyvinyl)-3-phosphoshikimate = chorismate + phosphate. It participates in metabolic intermediate biosynthesis; chorismate biosynthesis; chorismate from D-erythrose 4-phosphate and phosphoenolpyruvate: step 7/7. Catalyzes the anti-1,4-elimination of the C-3 phosphate and the C-6 proR hydrogen from 5-enolpyruvylshikimate-3-phosphate (EPSP) to yield chorismate, which is the branch point compound that serves as the starting substrate for the three terminal pathways of aromatic amino acid biosynthesis. This reaction introduces a second double bond into the aromatic ring system. In Pseudomonas aeruginosa (strain LESB58), this protein is Chorismate synthase.